Consider the following 810-residue polypeptide: DNA gyrase subunit A (810 aa).

The 467-residue stretch at 36–502 (LPDVRDGLKP…EVLKTSMSDL (467 aa)) folds into the Topo IIA-type catalytic domain. The active-site O-(5'-phospho-DNA)-tyrosine intermediate is Tyr124. A C-terminal domain region spans residues 499–810 (MSDLMQKENI…SLVSVSKFIK (312 aa)). The short motif at 529–535 (QGTGGKG) is the GyrA-box element.

This sequence belongs to the type II topoisomerase GyrA/ParC subunit family. Heterotetramer, composed of two GyrA and two GyrB chains. In the heterotetramer, GyrA contains the active site tyrosine that forms a transient covalent intermediate with DNA, while GyrB binds cofactors and catalyzes ATP hydrolysis.

It is found in the cytoplasm. It carries out the reaction ATP-dependent breakage, passage and rejoining of double-stranded DNA.. In terms of biological role, a type II topoisomerase that negatively supercoils closed circular double-stranded (ds) DNA in an ATP-dependent manner to modulate DNA topology and maintain chromosomes in an underwound state. Negative supercoiling favors strand separation, and DNA replication, transcription, recombination and repair, all of which involve strand separation. Also able to catalyze the interconversion of other topological isomers of dsDNA rings, including catenanes and knotted rings. Type II topoisomerases break and join 2 DNA strands simultaneously in an ATP-dependent manner. This Borreliella burgdorferi (strain ATCC 35210 / DSM 4680 / CIP 102532 / B31) (Borrelia burgdorferi) protein is DNA gyrase subunit A.